Here is a 156-residue protein sequence, read N- to C-terminus: Ribonuclease H (156 aa).

The region spanning 1-142 (MGKQVEIFTD…CDELARAAAN (142 aa)) is the RNase H type-1 domain. Asp10, Glu48, Asp70, and Asp134 together coordinate Mg(2+).

Belongs to the RNase H family. As to quaternary structure, monomer. The cofactor is Mg(2+).

Its subcellular location is the cytoplasm. It catalyses the reaction Endonucleolytic cleavage to 5'-phosphomonoester.. Functionally, endonuclease that specifically degrades the RNA of RNA-DNA hybrids. This Photorhabdus laumondii subsp. laumondii (strain DSM 15139 / CIP 105565 / TT01) (Photorhabdus luminescens subsp. laumondii) protein is Ribonuclease H.